Reading from the N-terminus, the 92-residue chain is Putative pterin-4-alpha-carbinolamine dehydratase (92 aa).

The protein belongs to the pterin-4-alpha-carbinolamine dehydratase family.

It catalyses the reaction (4aS,6R)-4a-hydroxy-L-erythro-5,6,7,8-tetrahydrobiopterin = (6R)-L-erythro-6,7-dihydrobiopterin + H2O. The sequence is that of Putative pterin-4-alpha-carbinolamine dehydratase from Cereibacter sphaeroides (strain ATCC 17023 / DSM 158 / JCM 6121 / CCUG 31486 / LMG 2827 / NBRC 12203 / NCIMB 8253 / ATH 2.4.1.) (Rhodobacter sphaeroides).